Here is a 494-residue protein sequence, read N- to C-terminus: BTB/POZ domain and ankyrin repeat-containing protein NH5.2 (494 aa).

The region spanning 25–131 (SDVAFSVEGR…LYSGQASVAA (107 aa)) is the BTB domain. The segment at 60-95 (NHQPPPPPPPPLNWPTAGGGGGGSGGGGRGGAGGGG) is disordered. The span at 61-72 (HQPPPPPPPPLN) shows a compositional bias: pro residues. Gly residues predominate over residues 76–95 (AGGGGGGSGGGGRGGAGGGG). The C2HC NPR-type zinc-finger motif lies at 137–151 (LPGCGARGCWHTRCG). The Zn(2+) site is built by Cys140, Cys145, His147, and Cys150. ANK repeat units lie at residues 275–303 (NKIRRMRRALDAADIELVKLMVMGEGLDL), 304–334 (DDALAVHYAVQHCNRDVVKALLELGAADVNS), 339–368 (TGKTALHLAAEMVSPDMVSVLLDHHADPNS), and 372–406 (DGVTPLDVLRSLTSEFLFKGAVPGLTHIEPNKLRL). Disordered stretches follow at residues 421-443 (DDGAPVTGGEAGGSDGGNFPRSD) and 471-494 (GEGRKSNNGRGSPPPAMYFPNGFA).

Belongs to the plant 'ANKYRIN-BTB/POZ' family. 'NOOT-BOP-COCH-like' (NBCL) subfamily. As to quaternary structure, homodimer. Interacts with TGAL5, TGAL7, TGAL8 and TGAL9.

It is found in the nucleus. Its subcellular location is the cytoplasm. Its pathway is protein modification; protein ubiquitination. In terms of biological role, may act as a substrate-specific adapter of an E3 ubiquitin-protein ligase complex (CUL3-RBX1-BTB) which mediates the ubiquitination and subsequent proteasomal degradation of target proteins. Transcriptional co-regulator involved in the promotion of leaf and floral meristem fate and determinacy. Required for the abscission of senescent organs, probably by regulating the cell wall disorganization in abscission zones (AZs, e.g. pulvini at the base of leaves). This chain is BTB/POZ domain and ankyrin repeat-containing protein NH5.2, found in Oryza sativa subsp. japonica (Rice).